Consider the following 394-residue polypeptide: Ceramide glucosyltransferase-B (394 aa).

The Lumenal portion of the chain corresponds to 1-10 (MAVLDLALQG). The chain crosses the membrane as a helical span at residues 11–32 (LAIFGCILFFVLWFMHFLSIVY). Topologically, residues 33–195 (TRLHLNKKVS…QVYFGTSHPR (163 aa)) are cytoplasmic. Position 92 (D92) is a short sequence motif, D1. A short sequence motif (D2) is located at residue D144. A helical transmembrane segment spans residues 196–215 (SYISANVTGIKCVTGMSCLM). Topologically, residues 216-287 (RKEVLDQAGG…KLRINMLPAT (72 aa)) are lumenal. D236 is a short sequence motif (D3). The Proton acceptor role is filled by D236. The (Q/R)XXRW motif lies at 272–276 (RMIRW). Residues 288–304 (IICEPISECFVASLIIG) traverse the membrane as a helical segment. Topologically, residues 305 to 309 (WAAHH) are cytoplasmic. The chain crosses the membrane as a helical span at residues 310 to 328 (IFRWDIMVFFMCHCLAWFI). Topologically, residues 329–348 (FDYIQLRGVQGGPLNFSKLD) are lumenal. The chain crosses the membrane as a helical span at residues 349–369 (YAVAWFIRESMTIYIFLSALW). At 370–394 (DPTISWRTGRYRLRCGGTAEEILDV) the chain is on the cytoplasmic side.

It belongs to the glycosyltransferase 2 family.

The protein resides in the golgi apparatus membrane. It carries out the reaction an N-acylsphing-4-enine + UDP-alpha-D-glucose = a beta-D-glucosyl-(1&lt;-&gt;1')-N-acylsphing-4-enine + UDP + H(+). The catalysed reaction is UDP-alpha-D-xylose + an N-acylsphing-4-enine = a beta-D-xylosyl-(1&lt;-&gt;1')-N-acylsphing-4-enine + UDP + H(+). The enzyme catalyses N-(9Z-octadecenoyl)-sphing-4-enine + UDP-alpha-D-xylose = beta-D-xylosyl-(1&lt;-&gt;1')-N-(9Z-octadecenoyl)-sphing-4-enine + UDP + H(+). It functions in the pathway lipid metabolism; sphingolipid metabolism. Its function is as follows. Participates in the initial step of the glucosylceramide-based glycosphingolipid/GSL synthetic pathway at the cytosolic surface of the Golgi. Catalyzes the transfer of glucose from UDP-glucose to ceramide to produce glucosylceramide/GlcCer (such as beta-D-glucosyl-(1&lt;-&gt;1')-N-acylsphing-4-enine). Glucosylceramide is the core component of glycosphingolipids/GSLs, amphipathic molecules consisting of a ceramide lipid moiety embedded in the outer leaflet of the membrane, linked to one of hundreds of different externally oriented oligosaccharide structures. Glycosphingolipids are essential components of membrane microdomains that mediate membrane trafficking and signal transduction. They are implicated in many fundamental cellular processes, including growth, differentiation, migration, morphogenesis, cell-to-cell and cell-to-matrix interactions. Catalyzes the synthesis of xylosylceramide/XylCer (such as beta-D-xylosyl-(1&lt;-&gt;1')-N-acylsphing-4-enine) using UDP-Xyl as xylose donor. This Xenopus laevis (African clawed frog) protein is Ceramide glucosyltransferase-B (ugcg-b).